The primary structure comprises 128 residues: Small ribosomal subunit protein uS11 (128 aa).

Belongs to the universal ribosomal protein uS11 family. In terms of assembly, part of the 30S ribosomal subunit. Interacts with proteins S7 and S18. Binds to IF-3.

In terms of biological role, located on the platform of the 30S subunit, it bridges several disparate RNA helices of the 16S rRNA. Forms part of the Shine-Dalgarno cleft in the 70S ribosome. The protein is Small ribosomal subunit protein uS11 of Desulforudis audaxviator (strain MP104C).